The primary structure comprises 242 residues: MGRKWENIKRSKAKLDQQRGATFSRITKDIMKAAREGGPDPETNFLLKVAVAAARKANMPNENIQRAIARGAGLDSAERFDEIVYEGYGPGGVAIMMNIVTDNRNRTAADVRHIFSKHGGSLGETGCVSWMFKKRGVIEIDRGETPIGEDDLMMIALDAGAEDLVTEEDSYAIYTAPDALNQVMKQLEAAGVPVEKGEVAMVPTTTVAVSGEEAEQLMRLLDLLEEHDDVQNVYTNADISEA.

This sequence belongs to the TACO1 family.

It localises to the cytoplasm. This Symbiobacterium thermophilum (strain DSM 24528 / JCM 14929 / IAM 14863 / T) protein is Probable transcriptional regulatory protein STH1004.